Reading from the N-terminus, the 305-residue chain is UDP-3-O-acyl-N-acetylglucosamine deacetylase (305 aa).

Positions 79, 238, and 242 each coordinate Zn(2+). The Proton donor role is filled by His265.

This sequence belongs to the LpxC family. Zn(2+) serves as cofactor.

It carries out the reaction a UDP-3-O-[(3R)-3-hydroxyacyl]-N-acetyl-alpha-D-glucosamine + H2O = a UDP-3-O-[(3R)-3-hydroxyacyl]-alpha-D-glucosamine + acetate. The protein operates within glycolipid biosynthesis; lipid IV(A) biosynthesis; lipid IV(A) from (3R)-3-hydroxytetradecanoyl-[acyl-carrier-protein] and UDP-N-acetyl-alpha-D-glucosamine: step 2/6. Functionally, catalyzes the hydrolysis of UDP-3-O-myristoyl-N-acetylglucosamine to form UDP-3-O-myristoylglucosamine and acetate, the committed step in lipid A biosynthesis. The chain is UDP-3-O-acyl-N-acetylglucosamine deacetylase from Salmonella agona (strain SL483).